A 349-amino-acid polypeptide reads, in one-letter code: S-adenosylmethionine:tRNA ribosyltransferase-isomerase (349 aa).

The protein belongs to the QueA family. In terms of assembly, monomer.

The protein resides in the cytoplasm. It catalyses the reaction 7-aminomethyl-7-carbaguanosine(34) in tRNA + S-adenosyl-L-methionine = epoxyqueuosine(34) in tRNA + adenine + L-methionine + 2 H(+). It participates in tRNA modification; tRNA-queuosine biosynthesis. In terms of biological role, transfers and isomerizes the ribose moiety from AdoMet to the 7-aminomethyl group of 7-deazaguanine (preQ1-tRNA) to give epoxyqueuosine (oQ-tRNA). In Flavobacterium psychrophilum (strain ATCC 49511 / DSM 21280 / CIP 103535 / JIP02/86), this protein is S-adenosylmethionine:tRNA ribosyltransferase-isomerase.